Consider the following 422-residue polypeptide: Cystine lyase CORI3 (422 aa).

Belongs to the class-I pyridoxal-phosphate-dependent aminotransferase family. In terms of assembly, homodimer. Pyridoxal 5'-phosphate is required as a cofactor. Expressed in cotyledons, sepals, pistils, flower buds, phloem companion cells and vascular tissues of petiole, leaf, filament and fruit.

It catalyses the reaction L-cystine + H2O = S-sulfanyl-L-cysteine + pyruvate + NH4(+). Its function is as follows. Possesses cystine lyase activity in vitro. Does not possess tyrosine aminotransferase, alanine aminotransferase, aspartate aminotransferase and tryptophan aminotransferase activities. The chain is Cystine lyase CORI3 from Arabidopsis thaliana (Mouse-ear cress).